Consider the following 299-residue polypeptide: Coenzyme PQQ synthesis protein B (299 aa).

It belongs to the PqqB family.

It participates in cofactor biosynthesis; pyrroloquinoline quinone biosynthesis. Its function is as follows. May be involved in the transport of PQQ or its precursor to the periplasm. This is Coenzyme PQQ synthesis protein B from Methylobacterium nodulans (strain LMG 21967 / CNCM I-2342 / ORS 2060).